Consider the following 318-residue polypeptide: ZAR1-like protein (318 aa).

Residues 149 to 211 (LSDPPEAGQP…PVDSSQPLGR (63 aa)) form a disordered region. The span at 155 to 169 (AGQPPPPLPPPSPPP) shows a compositional bias: pro residues. The 3CxxC-type zinc-finger motif lies at 219–304 (PKYGYFHCKD…QELCGRCKDK (86 aa)).

This sequence belongs to the ZAR1 family. As to quaternary structure, interacts with YBX2.

The protein localises to the cytoplasm. It is found in the cytoplasmic ribonucleoprotein granule. MRNA-binding protein required for maternal mRNA storage, translation and degradation during oocyte maturation. Probably promotes formation of some phase-separated membraneless compartment that stores maternal mRNAs in oocytes: acts by undergoing liquid-liquid phase separation upon binding to maternal mRNAs. Binds to the 3'-UTR of maternal mRNAs, inhibiting their translation. The sequence is that of ZAR1-like protein (ZAR1L) from Bos taurus (Bovine).